Reading from the N-terminus, the 545-residue chain is MTTRYIFVTGGVVSSLGKGIAAASLAAILEARGLNVTIMKLDPYINVDPGTMSPTQHGEVFVTEDGAETDLDLGHYERFIRTKMNRRNNFTTGRIYEEVLRKERRGDYLGATIQVIPHITNAIKEKVLAGGEGHDVAIVEIGGTVGDIESLPFLESIRQLGVELGRDRTLFMHLTLVPFLGAAGEVKTKPTQHSVKELRSIGIAPDVLVCRGDRAIPANEKAKISLFCNVEERAVISLKDVDSIYKIPALLRSQGLDDLVVKRFGLECREADLSEWENVIYQEANPNGEVVIGMVGKYIELPDAYKSVNEALKHAGLKNRVSVTIKYIDSQTVEAKGEEVLQGLDGILVPGGFGERGVEGKILAAKFARENNLPYFGICLGMQVALIEFARNVAGMADAHSTEFNKETPFPVVGLITEWIDEEGNVEQRHEASDLGGTMRLGAQLCHLLEGSKAAQAYKGNSCVERHRHRYEVNNKYRERLEQAGMIFSGLSSDRKLVEMIELKDHPWFVAGQFHPEFTSTPRDGHPLFEGFIAAASAHQKRDLK.

The interval 1–266 (MTTRYIFVTG…DDLVVKRFGL (266 aa)) is amidoligase domain. Residue Ser14 participates in CTP binding. Ser14 is a binding site for UTP. ATP-binding positions include 15-20 (SLGKGI) and Asp72. Asp72 and Glu140 together coordinate Mg(2+). CTP-binding positions include 147-149 (DIE), 187-192 (KTKPTQ), and Lys223. UTP is bound by residues 187–192 (KTKPTQ) and Lys223. 239–241 (KDV) contacts ATP. The region spanning 291–542 (VIGMVGKYIE…IAAASAHQKR (252 aa)) is the Glutamine amidotransferase type-1 domain. L-glutamine is bound at residue Gly352. Cys379 serves as the catalytic Nucleophile; for glutamine hydrolysis. L-glutamine-binding positions include 380–383 (LGMQ), Glu403, and Arg470. Catalysis depends on residues His515 and Glu517.

It belongs to the CTP synthase family. In terms of assembly, homotetramer.

The catalysed reaction is UTP + L-glutamine + ATP + H2O = CTP + L-glutamate + ADP + phosphate + 2 H(+). It catalyses the reaction L-glutamine + H2O = L-glutamate + NH4(+). It carries out the reaction UTP + NH4(+) + ATP = CTP + ADP + phosphate + 2 H(+). It participates in pyrimidine metabolism; CTP biosynthesis via de novo pathway; CTP from UDP: step 2/2. With respect to regulation, allosterically activated by GTP, when glutamine is the substrate; GTP has no effect on the reaction when ammonia is the substrate. The allosteric effector GTP functions by stabilizing the protein conformation that binds the tetrahedral intermediate(s) formed during glutamine hydrolysis. Inhibited by the product CTP, via allosteric rather than competitive inhibition. Catalyzes the ATP-dependent amination of UTP to CTP with either L-glutamine or ammonia as the source of nitrogen. Regulates intracellular CTP levels through interactions with the four ribonucleotide triphosphates. The chain is CTP synthase from Shewanella baltica (strain OS223).